A 257-amino-acid polypeptide reads, in one-letter code: Staphylococcal secretory antigen SsaA (257 aa).

The N-terminal stretch at 1-26 (MKKIATATIATAGIATFAFAHHDAQA) is a signal peptide. 8 tandem repeats follow at residues 73-75 (YNN), 76-78 (YNN), 84-86 (YNN), 87-89 (YSN), 90-92 (YNN), 93-95 (YSN), 96-98 (YNN), and 99-101 (YNN). Residues 73–101 (YNNYNNYNYYGYNNYSNYNNYSNYNNYNN) are 8 X 3 AA repeats of Y-[NS]-N. A disordered region spans residues 101-144 (NYQSNNTQSQRTTQPTGGLGASYSTSSSNVHVTTTSAPSSNGVS). The span at 107-116 (TQSQRTTQPT) shows a compositional bias: polar residues. Low complexity predominate over residues 122 to 136 (SYSTSSSNVHVTTTS). The Peptidase C51 domain maps to 136–257 (SAPSSNGVSL…SQAASYNYIH (122 aa)).

The protein resides in the secreted. Not known; immunogenic protein expressed during sepsis and particularly during episodes of infective endocarditis. This Staphylococcus epidermidis protein is Staphylococcal secretory antigen SsaA (ssaA).